A 375-amino-acid polypeptide reads, in one-letter code: Putrescine N-methyltransferase 1 (375 aa).

2 stretches are compositionally biased toward polar residues: residues 24 to 50 (HQNG…QNGT) and 57 to 77 (HQNG…GNEL). The disordered stretch occupies residues 24–77 (HQNGTSEHLNGYQNGTSKHQNGHQNGTFEHRNGHQNGTSEQQNGTISHDNGNEL). Positions 86 to 323 (PGWFSEFSAL…GVIGYMLCST (238 aa)) constitute a PABS domain. Residues Gln-117, Glu-192, and 223 to 224 (DG) contribute to the S-adenosyl-L-methionine site. Asp-242 serves as the catalytic Proton acceptor. Tyr-311 contributes to the S-adenosyl-L-methionine binding site.

Belongs to the class I-like SAM-binding methyltransferase superfamily. Putrescine methyltransferase family. As to expression, predominantly expressed in roots.

It catalyses the reaction putrescine + S-adenosyl-L-methionine = N-methylputrescine + S-adenosyl-L-homocysteine + H(+). It functions in the pathway alkaloid biosynthesis; nicotine biosynthesis. In terms of biological role, involved in the biosynthesis of pyridine alkaloid natural products, leading mainly to the production of anabasine, anatabine, nicotine and nornicotine, effective deterrents against herbivores with antiparasitic and pesticide properties (neurotoxins); nornicotine serves as the precursor in the synthesis of the carcinogen compound N'-nitrosonornicotine (NNN). Methyltransferase that mediates the conversion of putrescine to N-methylputrescine. Promotes leaves ripening. The chain is Putrescine N-methyltransferase 1 from Nicotiana tabacum (Common tobacco).